The sequence spans 370 residues: Histidinol-phosphate aminotransferase 3 (370 aa).

Lys-229 carries the post-translational modification N6-(pyridoxal phosphate)lysine.

The protein belongs to the class-II pyridoxal-phosphate-dependent aminotransferase family. Histidinol-phosphate aminotransferase subfamily. As to quaternary structure, homodimer. Pyridoxal 5'-phosphate serves as cofactor.

The enzyme catalyses L-histidinol phosphate + 2-oxoglutarate = 3-(imidazol-4-yl)-2-oxopropyl phosphate + L-glutamate. Its pathway is amino-acid biosynthesis; L-histidine biosynthesis; L-histidine from 5-phospho-alpha-D-ribose 1-diphosphate: step 7/9. In Rhizobium meliloti (strain 1021) (Ensifer meliloti), this protein is Histidinol-phosphate aminotransferase 3 (hisC3).